Consider the following 390-residue polypeptide: Scoulerine-9-O-methyltransferase 1 (390 aa).

Residue Glu-153 participates in substrate binding. S-adenosyl-L-methionine is bound by residues Met-207, Ser-211, Gly-235, Asp-258, 278-279 (DM), and Lys-292. Catalysis depends on His-296, which acts as the Proton acceptor. A substrate-binding site is contributed by 296-297 (HD).

Belongs to the class I-like SAM-binding methyltransferase superfamily. Cation-independent O-methyltransferase family. COMT subfamily. In terms of assembly, homodimer. Highly expressed in capsules. Expressed is stems. Expressed at low levels in roots.

The catalysed reaction is (S)-scoulerine + S-adenosyl-L-methionine = (S)-tetrahydrocolumbamine + S-adenosyl-L-homocysteine + H(+). It carries out the reaction (S)-tetrahydrocolumbamine + S-adenosyl-L-methionine = (S)-tetrahydropalmatine + S-adenosyl-L-homocysteine + H(+). It catalyses the reaction (S)-norreticuline + S-adenosyl-L-methionine = (S)-norcodamine + S-adenosyl-L-homocysteine + H(+). The enzyme catalyses (S)-reticuline + S-adenosyl-L-methionine = (S)-codamine + S-adenosyl-L-homocysteine + H(+). It participates in alkaloid biosynthesis. In terms of biological role, methyltransferase involved in the biosynthesis of the benzylisoquinoline alkaloid noscapine. Catalyzes the conversion of (S)-scoulerine to (S)-tetrahydrocolumbamine. Can convert (S)-tetrahydrocolumbamine to tetrahydropalmatine. Can convert (S)-norreticuline to (S)-norcodamine. Can convert (S)-reticuline to (S)-codamine. Substrate preference is (S)-scoulerine &gt; (S)-tetrahydrocolumbamine &gt; (S)-norreticuline &gt; (S)-reticuline. This chain is Scoulerine-9-O-methyltransferase 1, found in Papaver somniferum (Opium poppy).